A 1024-amino-acid chain; its full sequence is Carbamoyl phosphate synthase large chain (1024 aa).

The tract at residues 1 to 402 (MPKRTDLQTI…SLQKALRSTE (402 aa)) is carboxyphosphate synthetic domain. ATP is bound by residues Arg129, Arg169, Gly175, Gly176, Glu208, Ile210, Glu215, Gly241, Val242, His243, Gln285, and Glu299. Residues 133–328 (QAAMKKIGVE…IAKIAALLAV (196 aa)) form the ATP-grasp 1 domain. Residues Gln285, Glu299, and Asn301 each contribute to the Mg(2+) site. Mn(2+) contacts are provided by Gln285, Glu299, and Asn301. An oligomerization domain region spans residues 403-546 (GDIRGVYAEM…YSTYEWEDEV (144 aa)). A carbamoyl phosphate synthetic domain region spans residues 547–929 (APTDKPKVVI…AFYRAQLGAK (383 aa)). The ATP-grasp 2 domain maps to 671–863 (NALCERLGLP…LAKSAARIAA (193 aa)). Residues Arg707, Gln747, Leu749, Glu754, Gly779, Val780, His781, Ser782, Gln822, and Glu834 each contribute to the ATP site. Gln822, Glu834, and Asn836 together coordinate Mg(2+). Residues Gln822, Glu834, and Asn836 each coordinate Mn(2+). An MGS-like domain is found at 930 to 1024 (NYLPLEGTAL…GVRSLQEWVK (95 aa)). The segment at 930 to 1024 (NYLPLEGTAL…GVRSLQEWVK (95 aa)) is allosteric domain.

This sequence belongs to the CarB family. In terms of assembly, composed of two chains; the small (or glutamine) chain promotes the hydrolysis of glutamine to ammonia, which is used by the large (or ammonia) chain to synthesize carbamoyl phosphate. Tetramer of heterodimers (alpha,beta)4. It depends on Mg(2+) as a cofactor. Mn(2+) serves as cofactor.

The catalysed reaction is hydrogencarbonate + L-glutamine + 2 ATP + H2O = carbamoyl phosphate + L-glutamate + 2 ADP + phosphate + 2 H(+). It carries out the reaction hydrogencarbonate + NH4(+) + 2 ATP = carbamoyl phosphate + 2 ADP + phosphate + 2 H(+). It participates in amino-acid biosynthesis; L-arginine biosynthesis; carbamoyl phosphate from bicarbonate: step 1/1. It functions in the pathway pyrimidine metabolism; UMP biosynthesis via de novo pathway; (S)-dihydroorotate from bicarbonate: step 1/3. In terms of biological role, large subunit of the glutamine-dependent carbamoyl phosphate synthetase (CPSase). CPSase catalyzes the formation of carbamoyl phosphate from the ammonia moiety of glutamine, carbonate, and phosphate donated by ATP, constituting the first step of 2 biosynthetic pathways, one leading to arginine and/or urea and the other to pyrimidine nucleotides. The large subunit (synthetase) binds the substrates ammonia (free or transferred from glutamine from the small subunit), hydrogencarbonate and ATP and carries out an ATP-coupled ligase reaction, activating hydrogencarbonate by forming carboxy phosphate which reacts with ammonia to form carbamoyl phosphate. The sequence is that of Carbamoyl phosphate synthase large chain from Deinococcus radiodurans (strain ATCC 13939 / DSM 20539 / JCM 16871 / CCUG 27074 / LMG 4051 / NBRC 15346 / NCIMB 9279 / VKM B-1422 / R1).